The primary structure comprises 207 residues: Uridine kinase (207 aa).

11–18 (GGSGSGKT) is an ATP binding site.

Belongs to the uridine kinase family.

It is found in the cytoplasm. The enzyme catalyses uridine + ATP = UMP + ADP + H(+). It catalyses the reaction cytidine + ATP = CMP + ADP + H(+). The protein operates within pyrimidine metabolism; CTP biosynthesis via salvage pathway; CTP from cytidine: step 1/3. It participates in pyrimidine metabolism; UMP biosynthesis via salvage pathway; UMP from uridine: step 1/1. The protein is Uridine kinase of Staphylococcus epidermidis (strain ATCC 35984 / DSM 28319 / BCRC 17069 / CCUG 31568 / BM 3577 / RP62A).